The following is a 38-amino-acid chain: Photosystem II reaction center protein L (38 aa).

The chain crosses the membrane as a helical span at residues 17-37 (SLYWGLLLMFVLAVLFSSYFF).

This sequence belongs to the PsbL family. In terms of assembly, PSII is composed of 1 copy each of membrane proteins PsbA, PsbB, PsbC, PsbD, PsbE, PsbF, PsbH, PsbI, PsbJ, PsbK, PsbL, PsbM, PsbT, PsbX, PsbY, PsbZ, Psb30/Ycf12, at least 3 peripheral proteins of the oxygen-evolving complex and a large number of cofactors. It forms dimeric complexes.

It localises to the plastid. The protein resides in the chloroplast thylakoid membrane. Functionally, one of the components of the core complex of photosystem II (PSII). PSII is a light-driven water:plastoquinone oxidoreductase that uses light energy to abstract electrons from H(2)O, generating O(2) and a proton gradient subsequently used for ATP formation. It consists of a core antenna complex that captures photons, and an electron transfer chain that converts photonic excitation into a charge separation. This subunit is found at the monomer-monomer interface and is required for correct PSII assembly and/or dimerization. This chain is Photosystem II reaction center protein L, found in Emiliania huxleyi (Coccolithophore).